A 115-amino-acid polypeptide reads, in one-letter code: Vespryn (115 aa).

A signal peptide spans Met1 to Gly15. Residues Ser22–Thr115 enclose the B30.2/SPRY domain.

Belongs to the ohanin/vespryn family. As to expression, expressed by the venom gland.

It is found in the secreted. Functionally, neurotoxin that produces dose-dependent hypolocomotion and hyperalgesia in mice. May directly act on the central nervous system, as it is 6500-fold more potent when administered intracerebroventricularly than intraperitoneal. In Pogona barbata (Bearded dragon), this protein is Vespryn.